Here is a 103-residue protein sequence, read N- to C-terminus: Large ribosomal subunit protein bL21 (103 aa).

This sequence belongs to the bacterial ribosomal protein bL21 family. Part of the 50S ribosomal subunit. Contacts protein L20.

This protein binds to 23S rRNA in the presence of protein L20. This is Large ribosomal subunit protein bL21 from Maridesulfovibrio salexigens (strain ATCC 14822 / DSM 2638 / NCIMB 8403 / VKM B-1763) (Desulfovibrio salexigens).